Here is a 985-residue protein sequence, read N- to C-terminus: Phosphoenolpyruvate carboxylase (985 aa).

Low complexity predominate over residues 1 to 17 (MTQSAARRASSRATPAR). The tract at residues 1-55 (MTQSAARRASSRATPARKTPPAPASQTPAPSPGGTAGTALGPTSRRSSGSAAAKD) is disordered. Active-site residues include H193 and K634.

It belongs to the PEPCase type 1 family. Mg(2+) is required as a cofactor.

The catalysed reaction is oxaloacetate + phosphate = phosphoenolpyruvate + hydrogencarbonate. Its function is as follows. Forms oxaloacetate, a four-carbon dicarboxylic acid source for the tricarboxylic acid cycle. This chain is Phosphoenolpyruvate carboxylase, found in Ralstonia nicotianae (strain ATCC BAA-1114 / GMI1000) (Ralstonia solanacearum).